The following is a 176-amino-acid chain: Inner membrane-spanning protein YciB (176 aa).

The next 5 membrane-spanning stretches (helical) occupy residues 23 to 43 (MIAA…FLYW), 50 to 70 (TMQW…IVLG), 74 to 94 (FIMW…WGSH), 119 to 139 (LTYM…FVFT), and 150 to 170 (MFGS…YLST).

Belongs to the YciB family.

The protein resides in the cell inner membrane. In terms of biological role, plays a role in cell envelope biogenesis, maintenance of cell envelope integrity and membrane homeostasis. The protein is Inner membrane-spanning protein YciB of Neisseria meningitidis serogroup A / serotype 4A (strain DSM 15465 / Z2491).